We begin with the raw amino-acid sequence, 454 residues long: Bifunctional protein GlmU (454 aa).

The tract at residues 1–233 is pyrophosphorylase; that stretch reads MTNRTCLAVI…RESAVGINNR (233 aa). UDP-N-acetyl-alpha-D-glucosamine-binding positions include 11-14, lysine 25, glutamine 79, and 84-85; these read LAAG and GT. Aspartate 109 is a Mg(2+) binding site. Residues glycine 145, glutamate 159, asparagine 174, and asparagine 231 each coordinate UDP-N-acetyl-alpha-D-glucosamine. Residue asparagine 231 coordinates Mg(2+). A linker region spans residues 234–254; the sequence is AELAEAEAVWQQKRRRELMLS. The segment at 255 to 454 is N-acetyltransferase; sequence GVTLIAPETV…AEEKAKKSGG (200 aa). Residues arginine 320 and lysine 338 each coordinate UDP-N-acetyl-alpha-D-glucosamine. The active-site Proton acceptor is the histidine 350. UDP-N-acetyl-alpha-D-glucosamine is bound by residues tyrosine 353 and asparagine 364. Residues alanine 367, 373–374, serine 410, and arginine 427 each bind acetyl-CoA; that span reads NY.

The protein in the N-terminal section; belongs to the N-acetylglucosamine-1-phosphate uridyltransferase family. It in the C-terminal section; belongs to the transferase hexapeptide repeat family. As to quaternary structure, homotrimer. Mg(2+) serves as cofactor.

It is found in the cytoplasm. It carries out the reaction alpha-D-glucosamine 1-phosphate + acetyl-CoA = N-acetyl-alpha-D-glucosamine 1-phosphate + CoA + H(+). The enzyme catalyses N-acetyl-alpha-D-glucosamine 1-phosphate + UTP + H(+) = UDP-N-acetyl-alpha-D-glucosamine + diphosphate. Its pathway is nucleotide-sugar biosynthesis; UDP-N-acetyl-alpha-D-glucosamine biosynthesis; N-acetyl-alpha-D-glucosamine 1-phosphate from alpha-D-glucosamine 6-phosphate (route II): step 2/2. The protein operates within nucleotide-sugar biosynthesis; UDP-N-acetyl-alpha-D-glucosamine biosynthesis; UDP-N-acetyl-alpha-D-glucosamine from N-acetyl-alpha-D-glucosamine 1-phosphate: step 1/1. It participates in bacterial outer membrane biogenesis; LPS lipid A biosynthesis. In terms of biological role, catalyzes the last two sequential reactions in the de novo biosynthetic pathway for UDP-N-acetylglucosamine (UDP-GlcNAc). The C-terminal domain catalyzes the transfer of acetyl group from acetyl coenzyme A to glucosamine-1-phosphate (GlcN-1-P) to produce N-acetylglucosamine-1-phosphate (GlcNAc-1-P), which is converted into UDP-GlcNAc by the transfer of uridine 5-monophosphate (from uridine 5-triphosphate), a reaction catalyzed by the N-terminal domain. The chain is Bifunctional protein GlmU from Chelativorans sp. (strain BNC1).